The following is a 188-amino-acid chain: Elongation factor P 1 (188 aa).

The protein belongs to the elongation factor P family.

The protein localises to the cytoplasm. It functions in the pathway protein biosynthesis; polypeptide chain elongation. In terms of biological role, involved in peptide bond synthesis. Stimulates efficient translation and peptide-bond synthesis on native or reconstituted 70S ribosomes in vitro. Probably functions indirectly by altering the affinity of the ribosome for aminoacyl-tRNA, thus increasing their reactivity as acceptors for peptidyl transferase. This chain is Elongation factor P 1 (efp1), found in Porphyromonas gingivalis (strain ATCC BAA-308 / W83).